Here is a 259-residue protein sequence, read N- to C-terminus: Protein-L-isoaspartate O-methyltransferase (259 aa).

The tract at residues 1 to 25 is disordered; that stretch reads MRKRVDPPAGGRLAPGITPANSNTR. S107 is an active-site residue.

It belongs to the methyltransferase superfamily. L-isoaspartyl/D-aspartyl protein methyltransferase family.

The protein localises to the cytoplasm. The catalysed reaction is [protein]-L-isoaspartate + S-adenosyl-L-methionine = [protein]-L-isoaspartate alpha-methyl ester + S-adenosyl-L-homocysteine. Catalyzes the methyl esterification of L-isoaspartyl residues in peptides and proteins that result from spontaneous decomposition of normal L-aspartyl and L-asparaginyl residues. It plays a role in the repair and/or degradation of damaged proteins. The polypeptide is Protein-L-isoaspartate O-methyltransferase (Bordetella bronchiseptica (strain ATCC BAA-588 / NCTC 13252 / RB50) (Alcaligenes bronchisepticus)).